The sequence spans 156 residues: Small ribosomal subunit protein uS7 (156 aa).

The protein belongs to the universal ribosomal protein uS7 family. As to quaternary structure, part of the 30S ribosomal subunit. Contacts proteins S9 and S11.

In terms of biological role, one of the primary rRNA binding proteins, it binds directly to 16S rRNA where it nucleates assembly of the head domain of the 30S subunit. Is located at the subunit interface close to the decoding center, probably blocks exit of the E-site tRNA. The polypeptide is Small ribosomal subunit protein uS7 (Pseudarthrobacter chlorophenolicus (strain ATCC 700700 / DSM 12829 / CIP 107037 / JCM 12360 / KCTC 9906 / NCIMB 13794 / A6) (Arthrobacter chlorophenolicus)).